We begin with the raw amino-acid sequence, 316 residues long: Pantothenate kinase (316 aa).

95–102 provides a ligand contact to ATP; the sequence is GSVAVGKS.

The protein belongs to the prokaryotic pantothenate kinase family.

The protein localises to the cytoplasm. The enzyme catalyses (R)-pantothenate + ATP = (R)-4'-phosphopantothenate + ADP + H(+). Its pathway is cofactor biosynthesis; coenzyme A biosynthesis; CoA from (R)-pantothenate: step 1/5. In Shewanella putrefaciens (strain CN-32 / ATCC BAA-453), this protein is Pantothenate kinase.